Reading from the N-terminus, the 382-residue chain is Bifunctional enzyme IspD/IspF (382 aa).

Residues methionine 1–threonine 225 form a 2-C-methyl-D-erythritol 4-phosphate cytidylyltransferase region. The segment at arginine 226 to alanine 382 is 2-C-methyl-D-erythritol 2,4-cyclodiphosphate synthase. A divalent metal cation contacts are provided by aspartate 232 and histidine 234. 4-CDP-2-C-methyl-D-erythritol 2-phosphate-binding positions include aspartate 232 to histidine 234 and histidine 258 to serine 259. Histidine 266 provides a ligand contact to a divalent metal cation. 4-CDP-2-C-methyl-D-erythritol 2-phosphate-binding positions include aspartate 280–glycine 282, threonine 356–glutamate 359, phenylalanine 363, and arginine 366.

In the N-terminal section; belongs to the IspD/TarI cytidylyltransferase family. IspD subfamily. The protein in the C-terminal section; belongs to the IspF family. The cofactor is a divalent metal cation.

It carries out the reaction 2-C-methyl-D-erythritol 4-phosphate + CTP + H(+) = 4-CDP-2-C-methyl-D-erythritol + diphosphate. It catalyses the reaction 4-CDP-2-C-methyl-D-erythritol 2-phosphate = 2-C-methyl-D-erythritol 2,4-cyclic diphosphate + CMP. It participates in isoprenoid biosynthesis; isopentenyl diphosphate biosynthesis via DXP pathway; isopentenyl diphosphate from 1-deoxy-D-xylulose 5-phosphate: step 2/6. It functions in the pathway isoprenoid biosynthesis; isopentenyl diphosphate biosynthesis via DXP pathway; isopentenyl diphosphate from 1-deoxy-D-xylulose 5-phosphate: step 4/6. Functionally, bifunctional enzyme that catalyzes the formation of 4-diphosphocytidyl-2-C-methyl-D-erythritol from CTP and 2-C-methyl-D-erythritol 4-phosphate (MEP) (IspD), and catalyzes the conversion of 4-diphosphocytidyl-2-C-methyl-D-erythritol 2-phosphate (CDP-ME2P) to 2-C-methyl-D-erythritol 2,4-cyclodiphosphate (ME-CPP) with a corresponding release of cytidine 5-monophosphate (CMP) (IspF). The chain is Bifunctional enzyme IspD/IspF from Caulobacter vibrioides (strain ATCC 19089 / CIP 103742 / CB 15) (Caulobacter crescentus).